A 327-amino-acid chain; its full sequence is Guanine nucleotide-binding protein subunit beta-like protein 1 (327 aa).

WD repeat units follow at residues 16 to 54 (LRGT…IWSL), 58 to 97 (RAVT…LWDL), 103 to 145 (AVVD…ILEM), 153 to 195 (ALKP…LWDV), 200 to 237 (VCSR…VWSL), 242 to 282 (ALQV…VFHW), and 286 to 323 (QPLA…LWSL).

As to expression, ubiquitous. Highly expressed in heart, liver, skeletal muscle, kidney, spleen, thymus and pancreas. Detected at low levels in lung, placenta and brain.

Its subcellular location is the cytoplasm. It localises to the nucleus. In terms of biological role, acts as a critical regulator of DNA damage response (DDR) signaling via specifically regulating phosphatidylinositol 3-kinase-related protein kinase (PIKK) family proteins. The sequence is that of Guanine nucleotide-binding protein subunit beta-like protein 1 from Homo sapiens (Human).